The chain runs to 83 residues: MHVKKDEIVVVITGKDKGKQGKVLRVLPKENRVVVEGVNVVKKHTKPSAKNPNGGIIEMEAPIHASNVMSLAKIEAKKAKKKG.

The protein belongs to the universal ribosomal protein uL24 family. Part of the 50S ribosomal subunit.

In terms of biological role, one of two assembly initiator proteins, it binds directly to the 5'-end of the 23S rRNA, where it nucleates assembly of the 50S subunit. Its function is as follows. One of the proteins that surrounds the polypeptide exit tunnel on the outside of the subunit. The polypeptide is Large ribosomal subunit protein uL24 (Symbiobacterium thermophilum (strain DSM 24528 / JCM 14929 / IAM 14863 / T)).